Here is a 1206-residue protein sequence, read N- to C-terminus: DNA-directed RNA polymerase subunit beta' (1206 aa).

Zn(2+) contacts are provided by Cys-60, Cys-62, Cys-75, and Cys-78. Positions 449, 451, and 453 each coordinate Mg(2+). Zn(2+) is bound by residues Cys-818, Cys-892, Cys-899, and Cys-902.

It belongs to the RNA polymerase beta' chain family. As to quaternary structure, the RNAP catalytic core consists of 2 alpha, 1 beta, 1 beta' and 1 omega subunit. When a sigma factor is associated with the core the holoenzyme is formed, which can initiate transcription. Mg(2+) serves as cofactor. Requires Zn(2+) as cofactor.

It catalyses the reaction RNA(n) + a ribonucleoside 5'-triphosphate = RNA(n+1) + diphosphate. In terms of biological role, DNA-dependent RNA polymerase catalyzes the transcription of DNA into RNA using the four ribonucleoside triphosphates as substrates. The sequence is that of DNA-directed RNA polymerase subunit beta' from Shouchella clausii (strain KSM-K16) (Alkalihalobacillus clausii).